Here is a 352-residue protein sequence, read N- to C-terminus: Cuticle collagen dpy-17 (352 aa).

A signal peptide spans 1–29 (MSVFAGYAACTLGAVSMLLCVSLVPQVYQ). The segment at 61–64 (RVRR) is furin-like endopeptidase recognition region. Disordered stretches follow at residues 73–143 (GGYG…GPGD) and 156–352 (GPAG…GYRN). Over residues 87–97 (GPHGGFPGGPQ) the composition is skewed to gly residues. Triple-helical region stretches follow at residues 156-182 (GPAG…DGED), 202-264 (GPQG…DVEH), 267-290 (GLPG…QGDR), and 294-329 (GIAG…PGQD). The 58-residue stretch at 202–259 (GPQGPPGSQGKPGARGMRGARGQAAMPGRDGSPGMPGSLGPIGPPGAAGEEGPTGEPG) folds into the Collagen-like domain. Residues 207–259 (PGSQGKPGARGMRGARGQAAMPGRDGSPGMPGSLGPIGPPGAAGEEGPTGEPG) are compositionally biased toward low complexity. Residues 337 to 352 (QRNTNAAVSGNQGYRN) show a composition bias toward polar residues.

Belongs to the cuticular collagen family. Collagen polypeptide chains are complexed within the cuticle by disulfide bonds and other types of covalent cross-links.

Its subcellular location is the secreted. The protein resides in the extracellular space. In terms of biological role, secreted collagen that forms part of the nematode cuticle, which functions as an exoskeleton and a barrier to protect the worm from its environment. Secretion and subsequent incorporation into the cuticle is likely mediated by bli-4, which probably cleaves at the N-terminal consensus furin cleavage site. This is Cuticle collagen dpy-17 from Caenorhabditis elegans.